Here is a 309-residue protein sequence, read N- to C-terminus: Glutaminase (309 aa).

Substrate is bound by residues S64, N114, E160, N167, Y191, Y243, and V261.

Belongs to the glutaminase family. As to quaternary structure, homotetramer.

It catalyses the reaction L-glutamine + H2O = L-glutamate + NH4(+). The polypeptide is Glutaminase (Methylorubrum populi (strain ATCC BAA-705 / NCIMB 13946 / BJ001) (Methylobacterium populi)).